A 275-amino-acid chain; its full sequence is MTLQQQIIKALGAKPQINAEEEIRRSIDFLKSYLQTYPFIKSLVLGISGGQDSTLAGKLCQMAINELRQETGNESLQFIAVRLPYGVQADEQDCQDAIAFIQPDRVLTVNIKGAVLASEQALREAGIELSDFVRGNEKARERMKAQYSIAGMTSGVVVGTDHAAEAITGFFTKYGDGGTDINPLYRLNKRQGKQLLAALGCPEHLYKKAPTADLEDDRPSLPDEVALGVTYDNIDDYLEGKNVPEQVARTIENWYLKTEHKRRPPITVFDDFWKK.

46–53 (GISGGQDS) serves as a coordination point for ATP. A Mg(2+)-binding site is contributed by D52. Position 140 (R140) interacts with deamido-NAD(+). T160 is a binding site for ATP. A Mg(2+)-binding site is contributed by E165. Deamido-NAD(+) is bound by residues K173 and D180. Positions 189 and 211 each coordinate ATP. A deamido-NAD(+)-binding site is contributed by 260 to 261 (HK).

It belongs to the NAD synthetase family. Homodimer.

The catalysed reaction is deamido-NAD(+) + NH4(+) + ATP = AMP + diphosphate + NAD(+) + H(+). The protein operates within cofactor biosynthesis; NAD(+) biosynthesis; NAD(+) from deamido-NAD(+) (ammonia route): step 1/1. Its function is as follows. Catalyzes the ATP-dependent amidation of deamido-NAD to form NAD. Uses ammonia as a nitrogen source. In Escherichia coli O6:K15:H31 (strain 536 / UPEC), this protein is NH(3)-dependent NAD(+) synthetase.